A 372-amino-acid polypeptide reads, in one-letter code: Pyrimidine monooxygenase RutA (372 aa).

FMN contacts are provided by residues 57–58 (IK), N123, E132, 148–149 (RY), and S198.

It belongs to the NtaA/SnaA/DszA monooxygenase family. RutA subfamily.

The catalysed reaction is uracil + FMNH2 + NADH + O2 = (Z)-3-ureidoacrylate + FMN + NAD(+) + H2O + H(+). It carries out the reaction thymine + FMNH2 + NADH + O2 = (Z)-2-methylureidoacrylate + FMN + NAD(+) + H2O + H(+). Functionally, catalyzes the pyrimidine ring opening between N-3 and C-4 by an unusual flavin hydroperoxide-catalyzed mechanism, adding oxygen atoms in the process to yield ureidoacrylate peracid, that immediately reacts with FMN forming ureidoacrylate and FMN-N(5)-oxide. The FMN-N(5)-oxide reacts spontaneously with NADH to produce FMN. Requires the flavin reductase RutF to regenerate FMN in vivo. The chain is Pyrimidine monooxygenase RutA from Methylorubrum extorquens (strain PA1) (Methylobacterium extorquens).